Reading from the N-terminus, the 225-residue chain is Cold-regulated 413 inner membrane protein 1, chloroplastic (225 aa).

Residues 1-76 (MASLCLSSSR…RKRGSSVVCY (76 aa)) constitute a chloroplast transit peptide. Residue Ala-77 is a topological domain, stromal. Residues 78 to 98 (APISANSLQWISTISCLALML) traverse the membrane as a helical segment. Over 99-102 (ARGT) the chain is Chloroplast intermembrane. A helical transmembrane segment spans residues 103–123 (GIHKSVVVPLFALHAPSSIVA). Residues 124 to 128 (WIKGE) are Stromal-facing. The chain crosses the membrane as a helical span at residues 129-149 (YGVWAAFLALIARLFFTFPGE). The Chloroplast intermembrane segment spans residues 150–151 (LE). A helical membrane pass occupies residues 152 to 172 (LPFIALLLVIVAPYQVMNIRG). The Stromal segment spans residues 173 to 175 (KQE). A helical transmembrane segment spans residues 176 to 196 (GAIIAIAISGFLAFQHFSRAG). Topologically, residues 197–204 (SLEKAYEK) are chloroplast intermembrane. Residues 205–225 (GSVLATVAIIGVTVVSLLLLL) traverse the membrane as a helical segment.

This sequence belongs to the Cold-regulated 413 protein family.

Its subcellular location is the plastid. It localises to the chloroplast inner membrane. This chain is Cold-regulated 413 inner membrane protein 1, chloroplastic (COR413IM1), found in Arabidopsis thaliana (Mouse-ear cress).